Consider the following 235-residue polypeptide: 5'-methylthioadenosine/S-adenosylhomocysteine nucleosidase (235 aa).

Glu-12 serves as the catalytic Proton acceptor. Substrate-binding positions include Gly-78, Met-153, and 174–175 (ME). The Proton donor role is filled by Asp-198.

Belongs to the PNP/UDP phosphorylase family. MtnN subfamily.

It catalyses the reaction S-adenosyl-L-homocysteine + H2O = S-(5-deoxy-D-ribos-5-yl)-L-homocysteine + adenine. The catalysed reaction is S-methyl-5'-thioadenosine + H2O = 5-(methylsulfanyl)-D-ribose + adenine. It carries out the reaction 5'-deoxyadenosine + H2O = 5-deoxy-D-ribose + adenine. Its pathway is amino-acid biosynthesis; L-methionine biosynthesis via salvage pathway; S-methyl-5-thio-alpha-D-ribose 1-phosphate from S-methyl-5'-thioadenosine (hydrolase route): step 1/2. Catalyzes the irreversible cleavage of the glycosidic bond in both 5'-methylthioadenosine (MTA) and S-adenosylhomocysteine (SAH/AdoHcy) to adenine and the corresponding thioribose, 5'-methylthioribose and S-ribosylhomocysteine, respectively. Also cleaves 5'-deoxyadenosine, a toxic by-product of radical S-adenosylmethionine (SAM) enzymes, into 5-deoxyribose and adenine. The chain is 5'-methylthioadenosine/S-adenosylhomocysteine nucleosidase from Pseudoalteromonas translucida (strain TAC 125).